The chain runs to 1138 residues: Nuclear pore complex-interacting protein family member B13 (1138 aa).

The helical transmembrane segment at Val73–Ser93 threads the bilayer. 2 disordered regions span residues Arg242–Thr578 and Glu747–Ser1138. Over residues Gln252 to Leu263 the composition is skewed to polar residues. A compositionally biased stretch (pro residues) spans Pro349–Pro359. 10 stretches are compositionally biased toward basic and acidic residues: residues Asp406–Arg416, Asp448–Arg458, Asp490–Arg500, Asp532–Arg542, Asp782–Arg792, Asp824–Arg834, Asp866–Arg876, Asp908–Arg918, Asp950–Arg960, and Asp992–Arg1002.

It belongs to the NPIP family.

The protein resides in the membrane. The sequence is that of Nuclear pore complex-interacting protein family member B13 from Homo sapiens (Human).